The sequence spans 518 residues: MKTAEKLGIIGTTISIFGIGFGWGVFPWLIRMQIGRVSLSPGSETREFWEKIPFPIDFKIHIFNITNHVEVQNEGKIPNLQEIGPYYYKEWKEKSEMIDYENDDSITFFMKNTWFDNKEKTLPLTGDEMVIIPNPILVGLITAAEREKKGVLPMINKAIPILFNKPDSVFLKIKVYDLLFGGIIFNCTTKDFSASAVCAVLKKEAPFLETVSRSVFKFSILNQKNGTEEPLKLQIKRGIKDYTEVGKVIGANGKNKLTNWRGRPCNNLEGTDGTIFPSDISEHQDIWSFNLELCRSIPAKFVRKSEYKGIPAFRYNVTIGDTSTDPSLKCLCINDTFCWKKGAMELLKCSGLPVVATLPHFYDSHEDFLNGVKGLSPNEENHSIFFDIEPMTGTPLYAKKRIQFSFPLGKINKIDLTKNLPDTLLPFLWVEESIELPDYLIDKLNSELFRILQFLDVIKWVITLFGAGVVSGGVGLYYKEKNSLPITPTSSATSKKIDNPTDKTTTHELGHTNFGYIN.

The Cytoplasmic portion of the chain corresponds to 1 to 8; sequence MKTAEKLG. Residues 9–29 form a helical membrane-spanning segment; sequence IIGTTISIFGIGFGWGVFPWL. The Extracellular segment spans residues 30–456; sequence IRMQIGRVSL…ELFRILQFLD (427 aa). 6 N-linked (GlcNAc...) asparagine glycosylation sites follow: N64, N186, N225, N316, N334, and N381. 3 disulfide bridges follow: C265–C330, C294–C349, and C332–C338. Residues 457–477 traverse the membrane as a helical segment; sequence VIKWVITLFGAGVVSGGVGLY. Over 478–518 the chain is Cytoplasmic; that stretch reads YKEKNSLPITPTSSATSKKIDNPTDKTTTHELGHTNFGYIN.

This sequence belongs to the CD36 family.

It localises to the cell membrane. Its function is as follows. Plays an olfactory role that is not restricted to pheromone sensitivity. The sequence is that of Sensory neuron membrane protein 1 from Pediculus humanus subsp. corporis (Body louse).